The primary structure comprises 149 residues: SsrA-binding protein (149 aa).

Residues glycine 121 to arginine 149 form a disordered region. Positions lysine 127–arginine 149 are enriched in basic and acidic residues.

Belongs to the SmpB family.

Its subcellular location is the cytoplasm. Functionally, required for rescue of stalled ribosomes mediated by trans-translation. Binds to transfer-messenger RNA (tmRNA), required for stable association of tmRNA with ribosomes. tmRNA and SmpB together mimic tRNA shape, replacing the anticodon stem-loop with SmpB. tmRNA is encoded by the ssrA gene; the 2 termini fold to resemble tRNA(Ala) and it encodes a 'tag peptide', a short internal open reading frame. During trans-translation Ala-aminoacylated tmRNA acts like a tRNA, entering the A-site of stalled ribosomes, displacing the stalled mRNA. The ribosome then switches to translate the ORF on the tmRNA; the nascent peptide is terminated with the 'tag peptide' encoded by the tmRNA and targeted for degradation. The ribosome is freed to recommence translation, which seems to be the essential function of trans-translation. The polypeptide is SsrA-binding protein (Dechloromonas aromatica (strain RCB)).